Here is a 215-residue protein sequence, read N- to C-terminus: Probable phosphoglycerate mutase GpmB (215 aa).

Substrate is bound by residues 8-15 (RHGETQWN), 21-22 (QG), Arg58, Arg60, 82-85 (ELNM), 104-105 (RR), and 151-152 (GI). His9 (tele-phosphohistidine intermediate) is an active-site residue. Glu82 serves as the catalytic Proton donor/acceptor.

It belongs to the phosphoglycerate mutase family. GpmB subfamily.

It catalyses the reaction (2R)-2-phosphoglycerate = (2R)-3-phosphoglycerate. It functions in the pathway carbohydrate degradation; glycolysis; pyruvate from D-glyceraldehyde 3-phosphate: step 3/5. The chain is Probable phosphoglycerate mutase GpmB from Shigella dysenteriae serotype 1 (strain Sd197).